A 434-amino-acid polypeptide reads, in one-letter code: Glutamate-1-semialdehyde 2,1-aminomutase (434 aa).

The residue at position 270 (lysine 270) is an N6-(pyridoxal phosphate)lysine.

This sequence belongs to the class-III pyridoxal-phosphate-dependent aminotransferase family. HemL subfamily. Homodimer. The cofactor is pyridoxal 5'-phosphate.

Its subcellular location is the cytoplasm. The catalysed reaction is (S)-4-amino-5-oxopentanoate = 5-aminolevulinate. The protein operates within porphyrin-containing compound metabolism; protoporphyrin-IX biosynthesis; 5-aminolevulinate from L-glutamyl-tRNA(Glu): step 2/2. In Pelotomaculum thermopropionicum (strain DSM 13744 / JCM 10971 / SI), this protein is Glutamate-1-semialdehyde 2,1-aminomutase.